Here is a 586-residue protein sequence, read N- to C-terminus: Clathrin heavy chain linker domain-containing protein 1 (586 aa).

Positions 174-232 (MNLDALTKYMKHLEDKYAEIKQAMLIKYVPAQRKSDLDEEMIVLLKRRDVAENLNRKLQ) form a coiled coil.

The protein is Clathrin heavy chain linker domain-containing protein 1 (CLHC1) of Macaca fascicularis (Crab-eating macaque).